A 339-amino-acid chain; its full sequence is 3-isopropylmalate dehydrogenase (339 aa).

4 residues coordinate substrate: R88, R98, R122, and D212. Mg(2+) is bound by residues D212, D236, and D240. 272–284 is an NAD(+) binding site; it reads GSAPDIAGQGIAD.

It belongs to the isocitrate and isopropylmalate dehydrogenases family. LeuB type 2 subfamily. Homodimer. Mg(2+) serves as cofactor. Mn(2+) is required as a cofactor.

It is found in the cytoplasm. It carries out the reaction (2R,3S)-3-isopropylmalate + NAD(+) = 4-methyl-2-oxopentanoate + CO2 + NADH. It participates in amino-acid biosynthesis; L-leucine biosynthesis; L-leucine from 3-methyl-2-oxobutanoate: step 3/4. Catalyzes the oxidation of 3-carboxy-2-hydroxy-4-methylpentanoate (3-isopropylmalate) to 3-carboxy-4-methyl-2-oxopentanoate. The product decarboxylates to 4-methyl-2 oxopentanoate. This chain is 3-isopropylmalate dehydrogenase, found in Corynebacterium urealyticum (strain ATCC 43042 / DSM 7109).